Here is a 405-residue protein sequence, read N- to C-terminus: Serine-type anaerobic sulfatase-maturating enzyme (405 aa).

Positions 18-249 constitute a Radical SAM core domain; sequence PRSPVPFHIL…QWRKRCDRGR (232 aa). The [4Fe-4S] cluster site is built by Cys-35 and Cys-39. Tyr-41 is an S-adenosyl-L-methionine binding site. A [4Fe-4S] cluster-binding site is contributed by Cys-42. S-adenosyl-L-methionine contacts are provided by Gly-84, Ser-140, and Arg-152. [4Fe-4S] cluster contacts are provided by Cys-270, Cys-276, and Cys-291. The active-site Proton acceptor is Asp-292. 5 residues coordinate [4Fe-4S] cluster: Cys-331, Cys-334, Cys-340, Cys-344, and Cys-357.

This sequence belongs to the radical SAM superfamily. Anaerobic sulfatase-maturating enzyme family. In terms of assembly, monomer. Interacts with AtsA prior to its export to the periplasm. The cofactor is [4Fe-4S] cluster.

The protein resides in the cytoplasm. It carries out the reaction L-seryl-[sulfatase] + S-adenosyl-L-methionine = 3-oxo-L-alanyl-[sulfatase] + 5'-deoxyadenosine + L-methionine + H(+). It functions in the pathway protein modification; sulfatase oxidation. Its function is as follows. Involved in 'Ser-type' sulfatase maturation under anaerobic conditions. Catalyzes the post-translational modification of serine ('Ser-72' in the arylsulfatase AtsA) into 3-oxoalanine (also known as C(alpha)-formylglycine (FGly)), by a free radical chemical mechanism initiated via the reductive cleavage of S-adenosyl-L-methionine (SAM). This Klebsiella aerogenes (Enterobacter aerogenes) protein is Serine-type anaerobic sulfatase-maturating enzyme.